The following is a 354-amino-acid chain: Lysine racemase (354 aa).

At K36 the chain carries N6-(pyridoxal phosphate)lysine.

This sequence belongs to the alanine racemase family. In terms of assembly, homodimer. Pyridoxal 5'-phosphate is required as a cofactor.

It carries out the reaction L-lysine = D-lysine. The enzyme catalyses L-ornithine = D-ornithine. It participates in cell wall biogenesis; peptidoglycan biosynthesis. Functionally, catalyzes the interconversion of D-lysine and L-lysine. Has also high activity toward ornithine, and weaker activity toward alanine. Contributes to production of D-lysine and D-alanine for use as peptidoglycan components. The protein is Lysine racemase of Thermotoga maritima (strain ATCC 43589 / DSM 3109 / JCM 10099 / NBRC 100826 / MSB8).